The following is a 457-amino-acid chain: Polygalacturonase-2 (457 aa).

The signal sequence occupies residues methionine 1–serine 24. Positions asparagine 25–asparagine 71 are excised as a propeptide. N-linked (GlcNAc...) asparagine glycans are attached at residues asparagine 189 and asparagine 240. 2 PbH1 repeats span residues serine 228 to asparagine 255 and threonine 256 to serine 277. Catalysis depends on aspartate 270, which acts as the Proton donor. A glycan (N-linked (GlcNAc...) asparagine) is linked at asparagine 286. Histidine 293 is a catalytic residue. 2 PbH1 repeats span residues valine 309–threonine 330 and alanine 338–glutamine 359. The N-linked (GlcNAc...) asparagine glycan is linked to asparagine 311. The propeptide occupies leucine 445 to tyrosine 457.

The protein belongs to the glycosyl hydrolase 28 family. In terms of assembly, monomer PG2 (isoenzymes PG2A and PG2B). Also forms heterodimers called polygalacturonase 1 (PG1) with the beta subunit GP1. In terms of processing, N-glycosylated. PG2B isozyme has a greater degree of glycosylation than PG2A. Expressed only in ripening fruits (at protein level).

Its subcellular location is the secreted. It localises to the extracellular space. The protein resides in the apoplast. The protein localises to the cell wall. The enzyme catalyses (1,4-alpha-D-galacturonosyl)n+m + H2O = (1,4-alpha-D-galacturonosyl)n + (1,4-alpha-D-galacturonosyl)m.. Catalytic subunit of the polygalacturonase isozyme 1 and 2 (PG1 and PG2). Acts in concert with the pectinesterase, in the ripening process. Is involved in cell wall metabolism, specifically in polyuronide degradation. The depolymerization and solubilization of cell wall polyuronides mediated by PG2 during ripening seems to be limited by the beta subunit GP1, probably by recruiting PG2 to form PG1. The sequence is that of Polygalacturonase-2 (PG2) from Solanum lycopersicum (Tomato).